Consider the following 145-residue polypeptide: uncharacterized protein (145 aa).

Belongs to the asfivirus K145R family.

Its subcellular location is the virion. This is an uncharacterized protein from Ornithodoros (relapsing fever ticks).